The primary structure comprises 533 residues: MDLSGNEKSRPWKKANVSSSTISDIQMTNGENLESGSPTRTEVLSPRLDDGSVDSSSSLYSGSEHGNQAEIQKELSALFSNMSLPGNDRRPDEYILVRQTGQDAFTGIAKGNLDHMPTKAEFNACCRLYRDGAGNYYPPPLAFDKISVPAQLEETWGMMEAKERNKLRFQYKLDVWNHAHADMGITGTEIFYQTDKNIKLDRNYKLRPEDRYVQTERYGRREIQKRYQHELQAGSLLPDIMIKTPKNDIHFVYRFAGDNYANKQFSEFEHTVKRRYGGETEIKLKSKSGIMHDSKYLESWERGSADIRFAEFVGENRAHNRQFPTATVNMGQQPDGQGGLTRDRHVSVEFLMQSAPNSPWAQALKKGELWDRVQLLARDGNRYLSPHRLEYSDPEHFTELMNRVGLPASMGRQSHAASIKFEKFDAQAAVIVINGPELRDIHDLSPENLQNVSTKDVIVADRNENGQRTGTYTSVAEYERLQLRLPADAAGVLGEAADKYSRDFVRPEPASRPISDSRRIYESRPRSQSVNSF.

A compositionally biased stretch (basic and acidic residues) spans 1-10 (MDLSGNEKSR). 2 disordered regions span residues 1 to 67 (MDLS…EHGN) and 504 to 533 (FVRP…VNSF). The segment covering 16 to 42 (NVSSSTISDIQMTNGENLESGSPTRTE) has biased composition (polar residues). Over residues 53–63 (VDSSSSLYSGS) the composition is skewed to low complexity. Positions 515–525 (SDSRRIYESRP) are enriched in basic and acidic residues.

Forms heterodimers with the chaperone protein virE1 that prevent virE2 anarchic homopolymerization. Interacts with host VIP1 that mediates its translocation to the host nucleus and host VIP2 that promotes T-DNA integration into the host genome. Forms a complex made of VirE2, host VIP1 and VIP2 and single-stranded DNA (ssDNA). Forms a complex made of virE2 and host proteins VIP1 and VBF.

The protein localises to the secreted. It is found in the host nucleus. Involved in DNA transformation; mediates the nuclear uptake of single-stranded DNA copies of the transferred DNA (T-DNA) element. Binds single-stranded but not double-stranded DNA regardless of nucleotide sequence composition. The sequence is that of Single-strand DNA-binding protein (virE2) from Agrobacterium tumefaciens (strain 15955).